Consider the following 131-residue polypeptide: Prefoldin subunit beta (131 aa).

Disordered stretches follow at residues 19-41 (LQETAQQVAQQKQQAETQLRESE) and 112-131 (LQGGAGGGPMGPGGPGAGGA). Residues 20-35 (QETAQQVAQQKQQAET) show a composition bias toward low complexity. A compositionally biased stretch (gly residues) spans 114-131 (GGAGGGPMGPGGPGAGGA).

The protein belongs to the prefoldin subunit beta family. As to quaternary structure, heterohexamer of two alpha and four beta subunits.

The protein resides in the cytoplasm. Functionally, molecular chaperone capable of stabilizing a range of proteins. Seems to fulfill an ATP-independent, HSP70-like function in archaeal de novo protein folding. This Natronomonas pharaonis (strain ATCC 35678 / DSM 2160 / CIP 103997 / JCM 8858 / NBRC 14720 / NCIMB 2260 / Gabara) (Halobacterium pharaonis) protein is Prefoldin subunit beta.